Consider the following 103-residue polypeptide: Glutaredoxin-C1 (103 aa).

Positions 1–102 (MDRVNRLAAQ…PLLRNAGALW (102 aa)) constitute a Glutaredoxin domain. Cysteines 21 and 24 form a disulfide.

The protein belongs to the glutaredoxin family. CC-type subfamily.

Its subcellular location is the cytoplasm. Has a glutathione-disulfide oxidoreductase activity in the presence of NADPH and glutathione reductase. Reduces low molecular weight disulfides and proteins. The polypeptide is Glutaredoxin-C1 (GRXC1) (Oryza sativa subsp. japonica (Rice)).